Consider the following 243-residue polypeptide: Adenosylcobinamide-GDP ribazoletransferase (243 aa).

6 helical membrane-spanning segments follow: residues 33–53 (FLPV…LLAP), 59–79 (IIIV…HIDG), 105–125 (IGAF…TLAY), 127–147 (TENM…VFAA), 172–192 (VISI…GAII), and 223–243 (TIEI…SIII).

This sequence belongs to the CobS family. Mg(2+) serves as cofactor.

The protein resides in the cell membrane. The enzyme catalyses alpha-ribazole + adenosylcob(III)inamide-GDP = adenosylcob(III)alamin + GMP + H(+). The catalysed reaction is alpha-ribazole 5'-phosphate + adenosylcob(III)inamide-GDP = adenosylcob(III)alamin 5'-phosphate + GMP + H(+). The protein operates within cofactor biosynthesis; adenosylcobalamin biosynthesis; adenosylcobalamin from cob(II)yrinate a,c-diamide: step 7/7. Functionally, joins adenosylcobinamide-GDP and alpha-ribazole to generate adenosylcobalamin (Ado-cobalamin). Also synthesizes adenosylcobalamin 5'-phosphate from adenosylcobinamide-GDP and alpha-ribazole 5'-phosphate. This chain is Adenosylcobinamide-GDP ribazoletransferase, found in Alkaliphilus oremlandii (strain OhILAs) (Clostridium oremlandii (strain OhILAs)).